The primary structure comprises 390 residues: 8-amino-7-oxononanoate synthase (390 aa).

Arg19 provides a ligand contact to substrate. Position 106–107 (106–107 (GY)) interacts with pyridoxal 5'-phosphate. His131 is a binding site for substrate. 3 residues coordinate pyridoxal 5'-phosphate: Ser176, His204, and Thr233. An N6-(pyridoxal phosphate)lysine modification is found at Lys236. Thr350 contacts substrate.

This sequence belongs to the class-II pyridoxal-phosphate-dependent aminotransferase family. BioF subfamily. In terms of assembly, homodimer. Pyridoxal 5'-phosphate is required as a cofactor.

The enzyme catalyses 6-carboxyhexanoyl-[ACP] + L-alanine + H(+) = (8S)-8-amino-7-oxononanoate + holo-[ACP] + CO2. It functions in the pathway cofactor biosynthesis; biotin biosynthesis. Its function is as follows. Catalyzes the decarboxylative condensation of pimeloyl-[acyl-carrier protein] and L-alanine to produce 8-amino-7-oxononanoate (AON), [acyl-carrier protein], and carbon dioxide. The sequence is that of 8-amino-7-oxononanoate synthase from Pseudomonas putida (strain GB-1).